The sequence spans 258 residues: MGQKVNPLGFRLGITTDHRSRWFADSTKPGQRYRDYVREDVQIRKLMSTGLERAGISKVEIERTRDRVRVDLHTARPGIVIGRRGAEADRLRSELEKLTGKQVQLNILEVKNPELDAQLVAQGIAEQLASRVAFRRAMRKGMQSAQRAGAKGVRVQCSGRLGGAEMSRSEFYREGRVPLHTLRANIDYGFFEARTTFGRIGVKVWIYKGDMTEREFAREQASAAPRARGRADRPRGRRDEGAAPQQAAAPAATTGTEA.

The KH type-2 domain maps to 43-111 (IRKLMSTGLE…QVQLNILEVK (69 aa)). The disordered stretch occupies residues 217–258 (AREQASAAPRARGRADRPRGRRDEGAAPQQAAAPAATTGTEA). Residues 229–241 (GRADRPRGRRDEG) show a composition bias toward basic and acidic residues. Positions 242–258 (AAPQQAAAPAATTGTEA) are enriched in low complexity.

The protein belongs to the universal ribosomal protein uS3 family. As to quaternary structure, part of the 30S ribosomal subunit. Forms a tight complex with proteins S10 and S14.

Binds the lower part of the 30S subunit head. Binds mRNA in the 70S ribosome, positioning it for translation. The sequence is that of Small ribosomal subunit protein uS3 from Beutenbergia cavernae (strain ATCC BAA-8 / DSM 12333 / CCUG 43141 / JCM 11478 / NBRC 16432 / NCIMB 13614 / HKI 0122).